The following is an 89-amino-acid chain: DNA/RNA-binding protein Alba 2 (89 aa).

Lys12 is modified (N6-acetyllysine). Positions 14, 18, and 22 each coordinate Zn(2+).

It belongs to the histone-like Alba family. Forms homodimers and homotetramers. Homodimer at pH below 6.0. Forms homotetramers and higher order homooligomers at near the growth temperature of 80 degrees Celsius and pH 7.0. Interacts with Alba 1; heterodimers lack cooperative DNA-binding behavior and result in more compact chromatin structures compared to Alba 1 homodimers. Post-translationally, acetylated. Acetylation at Lys-12 decreases DNA-binding affinity.

It is found in the cytoplasm. The protein resides in the chromosome. Functionally, binds single-stranded DNA, RNA and double-stranded DNA. Involved in DNA compaction. The chain is DNA/RNA-binding protein Alba 2 from Saccharolobus solfataricus (strain ATCC 35092 / DSM 1617 / JCM 11322 / P2) (Sulfolobus solfataricus).